We begin with the raw amino-acid sequence, 653 residues long: MYLGFWLSRLCRGLSRPIGKTMRPIWGSLSRNLALSSQRIPEFSSFVARTNTCGELRSSHLGQEVTLCGWIQYRRQNTFLVLRDCHGLVQILIPQDESAASVRRILCEAPVESVVRVSGTVISRPPGQENPKMPTGEIEIKVKTAELLNACKKLPFEIKDFVKKTEALRLQYRYLDLRSFQMQYNLRLRSQMVMKMREYLCNLHGFVDIETPTLFKRTPGGAKEFLVPSREPGKFYSLPQSPQQFKQLLMVGGLDRYFQVARCYRDEGSRPDRQPEFTQIDIEMSFVEQTGIQRLVEGLLQYSWPGDKDPLVTPFPSMTFAEALATYGTDKPDTRFGMKIVDVSDVFRNTELRFLQDALAKPQGTVKAICVHDGAKYLRKEDIEFIRKFAVHHFSQEVLPIFLNAKKNWSSPFAKFIMEEERLELARSMEIQEEDIVLLTAGEHEKACSLLGKLRLECADLLEMRGAVLRDPAVFSFLWVVDFPLFLAKEESPTELESAHHPFTAPNSSDIHLLYTEPEKVRGQHYDLVLNGNEIGGGSVRIHDAQLQRYILETLLKEDVKLLSHLLQALDYGAPPHGGIALGLDRLVCLVTGAPSIRDVIAFPKSYRGQDLMSNAPDSVSPEELKPYHIHVLWPADSEEESASATPSKHLSS.

The N-terminal 46 residues, 1-46 (MYLGFWLSRLCRGLSRPIGKTMRPIWGSLSRNLALSSQRIPEFSSF), are a transit peptide targeting the mitochondrion. Phosphothreonine is present on threonine 218. Serine 241 is modified (phosphoserine). The interval 243 to 246 (QQFK) is aspartate. Residue arginine 265 participates in L-aspartate binding. Residues 265–267 (RDE) and glutamate 534 contribute to the ATP site. Arginine 541 contacts L-aspartate. ATP is bound at residue 583 to 586 (GLDR).

This sequence belongs to the class-II aminoacyl-tRNA synthetase family. Type 1 subfamily. In terms of assembly, homodimer.

It localises to the mitochondrion matrix. The protein resides in the mitochondrion membrane. The catalysed reaction is tRNA(Asp) + L-aspartate + ATP = L-aspartyl-tRNA(Asp) + AMP + diphosphate. Its function is as follows. Catalyzes the attachment of aspartate to tRNA(Asp) in a two-step reaction: aspartate is first activated by ATP to form Asp-AMP and then transferred to the acceptor end of tRNA(Asp). The sequence is that of Aspartate--tRNA ligase, mitochondrial (Dars2) from Mus musculus (Mouse).